We begin with the raw amino-acid sequence, 215 residues long: MTQSLADMRRDYTRDGLAEAQAPGEPFALFHQWFADAVKTEQPPVEANAMTLATVDGDGRPHCRVLLLKGLDDRGFTFFTNYDSAKGQQLQANPYAAMTFFWPALERQVRIEGRVEKVTPQESDDYYQVRPLGSRLGAWASPQSRVIASREALEGLVKATEARFSDTQPHCPEHWGGYRLLPERIEFWQGRASRLHDRLNYRWVDGQWARERLAP.

Substrate contacts are provided by residues 9-12 (RRDY) and K69. FMN contacts are provided by residues 64–69 (RVLLLK), 79–80 (FT), K86, and Q108. Substrate contacts are provided by Y126, R130, and S134. FMN-binding positions include 143–144 (QS) and W188. Substrate is bound at residue 194 to 196 (RLH). FMN is bound at residue R198.

The protein belongs to the pyridoxamine 5'-phosphate oxidase family. As to quaternary structure, homodimer. FMN serves as cofactor.

It catalyses the reaction pyridoxamine 5'-phosphate + O2 + H2O = pyridoxal 5'-phosphate + H2O2 + NH4(+). The catalysed reaction is pyridoxine 5'-phosphate + O2 = pyridoxal 5'-phosphate + H2O2. It functions in the pathway cofactor metabolism; pyridoxal 5'-phosphate salvage; pyridoxal 5'-phosphate from pyridoxamine 5'-phosphate: step 1/1. The protein operates within cofactor metabolism; pyridoxal 5'-phosphate salvage; pyridoxal 5'-phosphate from pyridoxine 5'-phosphate: step 1/1. Functionally, catalyzes the oxidation of either pyridoxine 5'-phosphate (PNP) or pyridoxamine 5'-phosphate (PMP) into pyridoxal 5'-phosphate (PLP). This chain is Pyridoxine/pyridoxamine 5'-phosphate oxidase, found in Pseudomonas putida (strain W619).